We begin with the raw amino-acid sequence, 440 residues long: MSIVSFCSSLPAGPHGFKHGRGTRDMVHMPCIVRRTARSPAQACRLLRWNKYHCAAVPTNSSLSPSPTPLDVEIELDLEPFLIKYKSGRIERLGRFGDRTDYVEASLDPATEVTSRDAITDTGVPVRIYLPKVDDSPPNSLRVLVYFHGGAFLVEDSASPPYHNYLNNLASKANILIVSVNYRLAPEYPLPVAYDDCMEALNWVNKHSDGTGQEDWINKHGDFDHLFISGDSAGGNITHNIAMSTDAPKNIEGIALVHPYFFGKVALETELQDPTNLLLHRKLWSFITPESEGLDDPRVNPLGPTAPSLEKIKCKRAVVFVAGEDFHSERGRKYSEKLKSEFKGEVPLLCNHDGVGHVYHLSVDATEEEIESAAAWKMMTDLLKFYKDNDVVLEGSIVESLKAKTTEGIKKMKEIEKGMSERMMEQLVAFYNGKPVPYSS.

The transit peptide at methionine 1 to proline 58 directs the protein to the amyloplast. Serine 232 functions as the Acyl-ester intermediate in the catalytic mechanism. Catalysis depends on charge relay system residues aspartate 325 and histidine 357.

The protein belongs to the AB hydrolase superfamily. As to quaternary structure, homodimer. In terms of processing, not glycosylated. In terms of tissue distribution, expressed in the pollen grains.

The protein localises to the plastid. It is found in the amyloplast. The enzyme catalyses 6-tuliposide B = tulipalin B + D-glucose. Its activity is regulated as follows. Inhibited by Ag(+), Cu(2+), Fe(2+), Hg(2+), V(3+) and phenylmethylsulfonyl fluoride (PMSF). Functionally, lactone-forming carboxylesterase, specifically catalyzing intramolecular transesterification, but not hydrolysis. Involved in the biosynthesis of tulipalins, defensive chemicals that show antimicrobial activities against a broad range of strains of bacteria and fungi. Substrates are 6-tuliposide B &gt; 6-tuliposide A. This is Tuliposide B-converting enzyme 1, amyloplastic from Tulipa gesneriana (Garden tulip).